Here is a 103-residue protein sequence, read N- to C-terminus: Small ribosomal subunit protein uS10 (103 aa).

This sequence belongs to the universal ribosomal protein uS10 family. In terms of assembly, part of the 30S ribosomal subunit.

Involved in the binding of tRNA to the ribosomes. This chain is Small ribosomal subunit protein uS10, found in Helicobacter hepaticus (strain ATCC 51449 / 3B1).